Consider the following 429-residue polypeptide: Enolase (429 aa).

Gln164 serves as a coordination point for (2R)-2-phosphoglycerate. The active-site Proton donor is Glu206. Positions 243, 286, and 313 each coordinate Mg(2+). (2R)-2-phosphoglycerate is bound by residues Lys338, Arg367, Ser368, and Lys389. Residue Lys338 is the Proton acceptor of the active site.

This sequence belongs to the enolase family. It depends on Mg(2+) as a cofactor.

It is found in the cytoplasm. The protein resides in the secreted. It localises to the cell surface. It catalyses the reaction (2R)-2-phosphoglycerate = phosphoenolpyruvate + H2O. It functions in the pathway carbohydrate degradation; glycolysis; pyruvate from D-glyceraldehyde 3-phosphate: step 4/5. Functionally, catalyzes the reversible conversion of 2-phosphoglycerate (2-PG) into phosphoenolpyruvate (PEP). It is essential for the degradation of carbohydrates via glycolysis. This Thermotoga sp. (strain RQ2) protein is Enolase.